The sequence spans 315 residues: Acetyl-coenzyme A carboxylase carboxyl transferase subunit alpha (315 aa).

Residues 40 to 293 (LQDKSKTLTE…REELSSQLAM (254 aa)) enclose the CoA carboxyltransferase C-terminal domain.

The protein belongs to the AccA family. As to quaternary structure, acetyl-CoA carboxylase is a heterohexamer composed of biotin carboxyl carrier protein (AccB), biotin carboxylase (AccC) and two subunits each of ACCase subunit alpha (AccA) and ACCase subunit beta (AccD).

The protein resides in the cytoplasm. The catalysed reaction is N(6)-carboxybiotinyl-L-lysyl-[protein] + acetyl-CoA = N(6)-biotinyl-L-lysyl-[protein] + malonyl-CoA. The protein operates within lipid metabolism; malonyl-CoA biosynthesis; malonyl-CoA from acetyl-CoA: step 1/1. Functionally, component of the acetyl coenzyme A carboxylase (ACC) complex. First, biotin carboxylase catalyzes the carboxylation of biotin on its carrier protein (BCCP) and then the CO(2) group is transferred by the carboxyltransferase to acetyl-CoA to form malonyl-CoA. This is Acetyl-coenzyme A carboxylase carboxyl transferase subunit alpha from Pseudomonas savastanoi pv. phaseolicola (strain 1448A / Race 6) (Pseudomonas syringae pv. phaseolicola (strain 1448A / Race 6)).